We begin with the raw amino-acid sequence, 166 residues long: Transcriptional repressor NrdR (166 aa).

The segment at 3–34 (CPFCGFSDSRVLDSRPTVEGNSIRRRRECCGC) is a zinc-finger region. The ATP-cone domain occupies 49–139 (LIVVKKDGRR…VYREFRDAES (91 aa)).

Belongs to the NrdR family. Requires Zn(2+) as cofactor.

Negatively regulates transcription of bacterial ribonucleotide reductase nrd genes and operons by binding to NrdR-boxes. This chain is Transcriptional repressor NrdR, found in Pelotomaculum thermopropionicum (strain DSM 13744 / JCM 10971 / SI).